The sequence spans 201 residues: Recombination protein RecR (201 aa).

Residues 57–72 form a C4-type zinc finger; that stretch reads CADCRTFTEQEICTIC. The Toprim domain maps to 81–176; that stretch reads GLICVVESPA…DASRIAHGVP (96 aa).

It belongs to the RecR family.

Functionally, may play a role in DNA repair. It seems to be involved in an RecBC-independent recombinational process of DNA repair. It may act with RecF and RecO. This is Recombination protein RecR from Erwinia tasmaniensis (strain DSM 17950 / CFBP 7177 / CIP 109463 / NCPPB 4357 / Et1/99).